A 217-amino-acid polypeptide reads, in one-letter code: Transcriptional regulatory protein CutR (217 aa).

One can recognise a Response regulatory domain in the interval 2–116 (RVLVVEDEQL…ELIARVRALG (115 aa)). Residue aspartate 51 is modified to 4-aspartylphosphate. Residues 124–217 (PPVLERAGIK…VTVPGSGYRI (94 aa)) constitute a DNA-binding region (ompR/PhoB-type).

Its function is as follows. Member of the two-component regulatory system CutS/CutR, involved in the regulation of copper metabolism. CutR suppresses a defective melC1 gene, encoding a putative copper-transfer gene, probably by altering copper metabolism. The chain is Transcriptional regulatory protein CutR (cutR) from Streptomyces lividans.